A 252-amino-acid polypeptide reads, in one-letter code: Triosephosphate isomerase (252 aa).

9-11 (NWK) is a binding site for substrate. H95 acts as the Electrophile in catalysis. The active-site Proton acceptor is E167. Residues G173, S213, and 234–235 (GG) contribute to the substrate site. Phosphoserine is present on S213.

It belongs to the triosephosphate isomerase family. In terms of assembly, homodimer.

The protein localises to the cytoplasm. The catalysed reaction is D-glyceraldehyde 3-phosphate = dihydroxyacetone phosphate. It participates in carbohydrate biosynthesis; gluconeogenesis. It functions in the pathway carbohydrate degradation; glycolysis; D-glyceraldehyde 3-phosphate from glycerone phosphate: step 1/1. In terms of biological role, involved in the gluconeogenesis. Catalyzes stereospecifically the conversion of dihydroxyacetone phosphate (DHAP) to D-glyceraldehyde-3-phosphate (G3P). The polypeptide is Triosephosphate isomerase (Oceanobacillus iheyensis (strain DSM 14371 / CIP 107618 / JCM 11309 / KCTC 3954 / HTE831)).